Here is a 330-residue protein sequence, read N- to C-terminus: AP-1-like transcription factor YAP3 (330 aa).

Residues 114-150 (SYSNTNYFSKNNGISPSSRSPSVAHNENVPDDSKAKK) form a disordered region. Residues 121-138 (FSKNNGISPSSRSPSVAH) are compositionally biased toward polar residues. S135 carries the phosphoserine modification. The 64-residue stretch at 144–207 (DDSKAKKKAQ…TEINAENRLL (64 aa)) folds into the bZIP domain. Residues 147–168 (KAKKKAQNRAAQKAFRERKEAR) are basic motif. Residues 172-207 (LQDKLLESERNRQSLLKEIEELRKANTEINAENRLL) form a leucine-zipper region.

Belongs to the bZIP family. YAP subfamily. As to quaternary structure, homodimer. Interacts with the C-terminal, cytoplasmic tail of the multidrug resistance ABC transporter PDR5.

It is found in the cytoplasm. The protein resides in the nucleus. Its function is as follows. Transcription activator involved in the regulation of genes expressed in response to environmental changes. When overexpressed it activates transcription of the multidrug resistance ABC transporter PDR5, thus conferring resistance to the fungicide fluconazole (FCZ) and cycloheximide. When overexpressed, it also confers, independent of PDR5, increased resistance to 4-nitroquinoline-N-oxide (4-NQO). Preferentially binds 5'-TTACTAA-3'. In Saccharomyces cerevisiae (strain ATCC 204508 / S288c) (Baker's yeast), this protein is AP-1-like transcription factor YAP3 (YAP3).